The following is a 358-amino-acid chain: MATGDDSFLWDQDSILSRDLFSATSAELCYENLNRSCVRSPYSPGPRLILYAVFGFGAVLAVCGNLLVMTSILHFRQLHSPANFLVASLACADFLVGLTVMPFSTVRSVEGCWYFGEIYCKLHTCFDVSFCSSSIFHLCFISVDRYIAVSDPLIYPTRFTASVSNKCITFSWLLSISYGFSLIYTGASEAGLEDLVSALTCVGGCQLAVNQSWVFINFLLFLIPTLVMITVYSKIFLIAKQQAQNIEKMSKQTARASDSYKDRVAKRERKAAKTLGIAVAAFLLSWLPYFIDSFIDAFLGFITPTYVYEILVWIAYYNSAMNPLIYAFFYPWFRKAIKLTVTGKILRENSSTTNLFPE.

Residues 1–47 lie on the Extracellular side of the membrane; that stretch reads MATGDDSFLWDQDSILSRDLFSATSAELCYENLNRSCVRSPYSPGPR. An N-linked (GlcNAc...) asparagine glycan is attached at Asn34. Intrachain disulfides connect Cys37-Cys201 and Cys120-Cys205. The helical transmembrane segment at 48–68 threads the bilayer; the sequence is LILYAVFGFGAVLAVCGNLLV. Over 69-83 the chain is Cytoplasmic; that stretch reads MTSILHFRQLHSPAN. A helical transmembrane segment spans residues 84 to 104; that stretch reads FLVASLACADFLVGLTVMPFS. Residues 105–121 are Extracellular-facing; that stretch reads TVRSVEGCWYFGEIYCK. Residues 122 to 143 form a helical membrane-spanning segment; the sequence is LHTCFDVSFCSSSIFHLCFISV. The Cytoplasmic portion of the chain corresponds to 144–166; sequence DRYIAVSDPLIYPTRFTASVSNK. The helical transmembrane segment at 167–187 threads the bilayer; it reads CITFSWLLSISYGFSLIYTGA. Residues 188–212 are Extracellular-facing; that stretch reads SEAGLEDLVSALTCVGGCQLAVNQS. Residue Asn210 is glycosylated (N-linked (GlcNAc...) asparagine). The chain crosses the membrane as a helical span at residues 213-233; it reads WVFINFLLFLIPTLVMITVYS. Residues 234–274 are Cytoplasmic-facing; the sequence is KIFLIAKQQAQNIEKMSKQTARASDSYKDRVAKRERKAAKT. A helical transmembrane segment spans residues 275–295; sequence LGIAVAAFLLSWLPYFIDSFI. Topologically, residues 296–309 are extracellular; sequence DAFLGFITPTYVYE. A helical membrane pass occupies residues 310 to 333; sequence ILVWIAYYNSAMNPLIYAFFYPWF. At 334–358 the chain is on the cytoplasmic side; it reads RKAIKLTVTGKILRENSSTTNLFPE.

Belongs to the G-protein coupled receptor 1 family. Specifically expressed in neurons of the olfactory epithelium.

The protein resides in the cell membrane. Its function is as follows. Olfactory receptor specific for N,N-dimethylalkylamines trace amines. Trace amine compounds are enriched in animal body fluids and act on trace amine-associated receptors (TAARs) to elicit both intraspecific and interspecific innate behaviors. Ligand-binding causes a conformation change that triggers signaling via G(s)-class of G alpha proteins (GNAL or GNAS). In Mus musculus (Mouse), this protein is Trace amine-associated receptor 7e.